The chain runs to 100 residues: CCAAT/enhancer-binding protein homolog 2 (100 aa).

2 disordered regions span residues Met1–Glu60 and Ala79–Val100. In terms of domain architecture, bZIP spans Glu17–Tyr80. Residues Lys23–Lys48 form a basic motif region. Residues Arg24 to Asn83 are a coiled coil. The segment covering Arg39–Glu60 has biased composition (basic and acidic residues). The segment at Leu52–Leu73 is leucine-zipper. The span at Gly88 to Val100 shows a compositional bias: pro residues.

The protein belongs to the bZIP family. C/EBP subfamily. In terms of assembly, interacts with transcription factor zip-11. As to expression, expressed broadly in somatic tissues including the intestine.

The protein localises to the nucleus. Transcription factor that binds to the promoter and the enhancer regions of target genes. Regulates expression of genes involved in fat metabolism, including ech-1.1 and fat-5. Has a protective role in response to infection by the Gram-negative bacterium P.aeruginosa. Required for the activation of infection response gene irg-1 following P.aeruginosa infection. Required to prevent P.aeruginosa ToxA-mediated lethality. May also function in concert with transcription factor zip-11 to mediate immune responses, independently of the pmk-1/p38 MAPK pathway. May act together with the bZIP transcription factor, zip-2. The protein is CCAAT/enhancer-binding protein homolog 2 of Caenorhabditis elegans.